Reading from the N-terminus, the 1009-residue chain is Lateral signaling target protein 2 homolog (1009 aa).

Disordered stretches follow at residues 313-460 (PVGS…EEQL), 497-629 (ASED…KRCS), and 777-905 (MQRN…TATA). Composition is skewed to low complexity over residues 327-348 (SSTP…SSSG), 364-398 (QRNN…TPTA), and 406-427 (PSHS…HPPA). A compositionally biased stretch (acidic residues) spans 430–458 (SDGDDEDEDEEEDEEEDELEDTEDDTDEE). Ser541 carries the post-translational modification Phosphoserine. A compositionally biased stretch (basic and acidic residues) spans 544-558 (SEPHRDQGETIKSTE). Positions 562 to 575 (QQQQQQEQQTLQSS) are enriched in low complexity. 2 stretches are compositionally biased toward basic residues: residues 576-601 (RQRH…HHST) and 609-627 (QPHH…GRKR). Over residues 780 to 798 (NNTIDNPSSSNTSSSSATT) the composition is skewed to low complexity. Ser807 carries the post-translational modification Phosphoserine. Low complexity predominate over residues 822-878 (VHQQEQEMQQQQDHQQQQHQHQVQVQLQRQRNNSVGSNTPSSASSTSSSSEQNSPVS). The segment at 917 to 977 (DGKAPRCMSC…VCRDCYVREV (61 aa)) adopts an FYVE-type zinc-finger fold. Cys923, Cys926, Cys939, Cys942, Cys947, Cys950, Cys969, and Cys972 together coordinate Zn(2+).

This sequence belongs to the lst-2 family.

Negative regulator of epidermal growth factor receptor (EGFR) signaling. This Drosophila persimilis (Fruit fly) protein is Lateral signaling target protein 2 homolog.